Consider the following 326-residue polypeptide: GATA zinc finger domain-containing protein 21 (326 aa).

2 disordered regions span residues 1–102 (MFRN…NNNN) and 145–238 (QNQS…TPER). Composition is skewed to low complexity over residues 17 to 102 (NTNL…NNNN) and 148 to 164 (SSSS…GSSA). A compositionally biased stretch (polar residues) spans 165 to 189 (LNSINNNNYSPTTSSLNRVRNQYNQ). Residues 193 to 218 (DEEDDDYDNGAEDGFDYDGDDNEDGS) show a composition bias toward acidic residues. The GATA-type zinc finger occupies 239-266 (CSNCKITHSSYWRRITVNGQKLDFCNAC). The tract at residues 277–326 (IKESKQRHSIQNIMNQNQEEEEEEREEEEEEEEEEDEEFETLEEEEEDDE) is disordered. A compositionally biased stretch (acidic residues) spans 294–326 (QEEEEEEREEEEEEEEEEDEEFETLEEEEEDDE).

In Dictyostelium discoideum (Social amoeba), this protein is GATA zinc finger domain-containing protein 21 (gtaU).